Reading from the N-terminus, the 263-residue chain is Ribosomal RNA large subunit methyltransferase E (263 aa).

Residues 1–34 form a disordered region; the sequence is MSSAEGPKSGGGSKGSKSEASSRVRGSAPTGSRD. The S-adenosyl-L-methionine site is built by Gly-102, Trp-104, Asp-126, Asp-142, and Asp-166. Residue Lys-206 is the Proton acceptor of the active site.

This sequence belongs to the class I-like SAM-binding methyltransferase superfamily. RNA methyltransferase RlmE family.

It is found in the cytoplasm. The catalysed reaction is uridine(2552) in 23S rRNA + S-adenosyl-L-methionine = 2'-O-methyluridine(2552) in 23S rRNA + S-adenosyl-L-homocysteine + H(+). Specifically methylates the uridine in position 2552 of 23S rRNA at the 2'-O position of the ribose in the fully assembled 50S ribosomal subunit. The polypeptide is Ribosomal RNA large subunit methyltransferase E (Rhodospirillum rubrum (strain ATCC 11170 / ATH 1.1.1 / DSM 467 / LMG 4362 / NCIMB 8255 / S1)).